Consider the following 604-residue polypeptide: Aspartate--tRNA(Asp/Asn) ligase (604 aa).

E177 lines the L-aspartate pocket. The aspartate stretch occupies residues 201 to 204 (QLFK). Position 223 (R223) interacts with L-aspartate. ATP contacts are provided by residues 223 to 225 (RDE) and Q232. H457 is a binding site for L-aspartate. ATP is bound at residue E495. R502 serves as a coordination point for L-aspartate. Residue 547–550 (GLDR) coordinates ATP.

Belongs to the class-II aminoacyl-tRNA synthetase family. Type 1 subfamily. In terms of assembly, homodimer.

It localises to the cytoplasm. It carries out the reaction tRNA(Asx) + L-aspartate + ATP = L-aspartyl-tRNA(Asx) + AMP + diphosphate. Aspartyl-tRNA synthetase with relaxed tRNA specificity since it is able to aspartylate not only its cognate tRNA(Asp) but also tRNA(Asn). Reaction proceeds in two steps: L-aspartate is first activated by ATP to form Asp-AMP and then transferred to the acceptor end of tRNA(Asp/Asn). This chain is Aspartate--tRNA(Asp/Asn) ligase, found in Synechococcus sp. (strain RCC307).